Consider the following 147-residue polypeptide: 6,7-dimethyl-8-ribityllumazine synthase (147 aa).

Residues Phe-16, 48 to 50 (TFD), and 73 to 75 (AVI) each bind 5-amino-6-(D-ribitylamino)uracil. (2S)-2-hydroxy-3-oxobutyl phosphate is bound at residue 78 to 79 (DT). Catalysis depends on His-81, which acts as the Proton donor. Leu-106 serves as a coordination point for 5-amino-6-(D-ribitylamino)uracil. Residue Arg-121 participates in (2S)-2-hydroxy-3-oxobutyl phosphate binding.

Belongs to the DMRL synthase family.

It carries out the reaction (2S)-2-hydroxy-3-oxobutyl phosphate + 5-amino-6-(D-ribitylamino)uracil = 6,7-dimethyl-8-(1-D-ribityl)lumazine + phosphate + 2 H2O + H(+). The protein operates within cofactor biosynthesis; riboflavin biosynthesis; riboflavin from 2-hydroxy-3-oxobutyl phosphate and 5-amino-6-(D-ribitylamino)uracil: step 1/2. Its function is as follows. Catalyzes the formation of 6,7-dimethyl-8-ribityllumazine by condensation of 5-amino-6-(D-ribitylamino)uracil with 3,4-dihydroxy-2-butanone 4-phosphate. This is the penultimate step in the biosynthesis of riboflavin. The protein is 6,7-dimethyl-8-ribityllumazine synthase of Aeropyrum pernix (strain ATCC 700893 / DSM 11879 / JCM 9820 / NBRC 100138 / K1).